Consider the following 580-residue polypeptide: Cyclin-K (580 aa).

The segment at Lys-262–Arg-580 is disordered. 2 stretches are compositionally biased toward low complexity: residues Gln-263–Pro-277 and Val-285–Lys-321. 4 positions are modified to phosphoserine: Ser-324, Ser-328, Ser-329, and Ser-340. Low complexity predominate over residues Pro-377–Glu-386. Over residues Gln-400–Ser-426 the composition is skewed to pro residues. The span at Ser-427–Tyr-444 shows a compositional bias: low complexity. A compositionally biased stretch (pro residues) spans Val-477 to Pro-568.

It belongs to the cyclin family. Cyclin C subfamily. Regulatory subunit of cyclin-dependent kinases. Identified in a complex with a kinase and the RNA polymerase II holoenzyme. Interacts with POLR2A. Interacts with CDK12 and CDK13. Interacts with CDK9 according to PubMed:10574912; does not interact with CDK9 according to PubMed:22012619. In terms of assembly, (Microbial infection) Interacts with human herpes virus 1 (HHV-1) transcriptional regulator ICP22. Widely expressed. Highest levels in testis.

The protein localises to the nucleus. Its function is as follows. Regulatory subunit of cyclin-dependent kinases that mediates activation of target kinases. Plays a role in transcriptional regulation via its role in regulating the phosphorylation of the C-terminal domain (CTD) of the large subunit of RNA polymerase II (POLR2A). This Homo sapiens (Human) protein is Cyclin-K (CCNK).